A 130-amino-acid chain; its full sequence is Small ribosomal subunit protein uS8 (130 aa).

Belongs to the universal ribosomal protein uS8 family. Part of the 30S ribosomal subunit. Contacts proteins S5 and S12.

Its function is as follows. One of the primary rRNA binding proteins, it binds directly to 16S rRNA central domain where it helps coordinate assembly of the platform of the 30S subunit. The protein is Small ribosomal subunit protein uS8 of Histophilus somni (strain 129Pt) (Haemophilus somnus).